The primary structure comprises 442 residues: 3-oxoacyl-[acyl-carrier-protein] synthase homolog (442 aa).

The region spanning 2–438 is the Ketosynthase family 3 (KS3) domain; that stretch reads SRRVVITGLG…GVNTSLLFKK (437 aa). Residues Cys-187, His-322, and His-362 each act as for beta-ketoacyl synthase activity in the active site.

It belongs to the thiolase-like superfamily. Beta-ketoacyl-ACP synthases family.

It localises to the mitochondrion. It catalyses the reaction a fatty acyl-[ACP] + malonyl-[ACP] + H(+) = a 3-oxoacyl-[ACP] + holo-[ACP] + CO2. Functionally, possibly involved in the synthesis of a specialized molecule, probably related to a fatty acid, which is essential for mitochondrial respiration. Is essential for oxygen uptake and the presence of cytochromes A and B. In Saccharomyces cerevisiae (strain ATCC 204508 / S288c) (Baker's yeast), this protein is 3-oxoacyl-[acyl-carrier-protein] synthase homolog (CEM1).